The sequence spans 210 residues: MVRRTKEEAQETRAQIIEAAERAFYKRGVARTTLADIAELAGVTRGAIYWHFNNKAELVQALLDSLHETHDHLARASESEDELDPLGCMRKLLLQVFNELVLDARTRRINEILHHKCEFTDDMCEIRQQRQSAVLDCHKGITLALANAVRRGQLPGELDVERAAVAMFAYVDGLIGRWLLLPDSVDLLGDVEKWVDTGLDMLRLSPALRK.

The HTH tetR-type domain maps to 10–70 (QETRAQIIEA…ALLDSLHETH (61 aa)). A DNA-binding region (H-T-H motif) is located at residues 33-52 (TLADIAELAGVTRGAIYWHF).

Probable regulatory protein for the antibiotic efflux pump arpABC operon. May function as a repressor. In Pseudomonas putida (Arthrobacter siderocapsulatus), this protein is Probable HTH-type transcriptional regulator ArpR (arpR).